The sequence spans 636 residues: Basic helix-loop-helix ARNT-like protein 2 (636 aa).

The tract at residues 25–62 (VSSRVSPGTRPTAMGSFSSHMTEFPRKRKGSDSDPSQS) is disordered. An interaction with PER2 region spans residues 46-258 (TEFPRKRKGS…SPREKLIDAK (213 aa)). A Nuclear localization signal motif is present at residues 49-54 (PRKRKG). A bHLH domain is found at 107–160 (AFREAHSQTEKRRRDKMNNLIEELSAMIPQCNPMARKLDKLTVLRMAVQHLRSL). The Nuclear export signal 1 motif lies at 177-187 (LQDNELRHLIL). Positions 178–250 (QDNELRHLIL…EQLSSFDISP (73 aa)) constitute a PAS 1 domain. Lys287 is covalently cross-linked (Glycyl lysine isopeptide (Lys-Gly) (interchain with G-Cter in SUMO2 and SUMO3)). A Glycyl lysine isopeptide (Lys-Gly) (interchain with G-Cter in SUMO2) cross-link involves residue Lys294. In terms of domain architecture, PAS 2 spans 357–427 (VPQNSGEINV…DKHKAVLQSK (71 aa)). A Nuclear export signal 2 motif is present at residues 392–400 (LGYLPQELL). Positions 432-475 (TDSYKFRAKDGSFVTLKSQWFSFTNPWTKELEYIVSVNTLVLGH) constitute a PAC domain.

Component of the circadian core oscillator, which includes the CRY proteins, CLOCK, or NPAS2, BMAL1 or BMAL2, CSNK1D and/or CSNK1E, TIMELESS and the PER proteins. Interacts directly with CLOCK to form the BMAL2-CLOCK transactivator. Can form heterodimers or homodimers which interact directly with CLOCK to form the transcription activator. Interacts with NPAS2 and HIF1A. Interacts with PER2. As to expression, expressed in fetal brain. Highly expressed in brain and placenta. Lower levels in heart, liver, thymus, kidney and lung. Located to endothelial cells and neuronal cells of the suprachiasmatic nucleus (SCN). Also detected in endothelial cells of the heart, lung and kidney. In the brain, specifically expressed in the thalamus, hippocampus and amygdala.

It localises to the nucleus. In terms of biological role, transcriptional activator which forms a core component of the circadian clock. The circadian clock, an internal time-keeping system, regulates various physiological processes through the generation of approximately 24 hour circadian rhythms in gene expression, which are translated into rhythms in metabolism and behavior. It is derived from the Latin roots 'circa' (about) and 'diem' (day) and acts as an important regulator of a wide array of physiological functions including metabolism, sleep, body temperature, blood pressure, endocrine, immune, cardiovascular, and renal function. Consists of two major components: the central clock, residing in the suprachiasmatic nucleus (SCN) of the brain, and the peripheral clocks that are present in nearly every tissue and organ system. Both the central and peripheral clocks can be reset by environmental cues, also known as Zeitgebers (German for 'timegivers'). The predominant Zeitgeber for the central clock is light, which is sensed by retina and signals directly to the SCN. The central clock entrains the peripheral clocks through neuronal and hormonal signals, body temperature and feeding-related cues, aligning all clocks with the external light/dark cycle. Circadian rhythms allow an organism to achieve temporal homeostasis with its environment at the molecular level by regulating gene expression to create a peak of protein expression once every 24 hours to control when a particular physiological process is most active with respect to the solar day. Transcription and translation of core clock components (CLOCK, NPAS2, BMAL1, BMAL2, PER1, PER2, PER3, CRY1 and CRY2) plays a critical role in rhythm generation, whereas delays imposed by post-translational modifications (PTMs) are important for determining the period (tau) of the rhythms (tau refers to the period of a rhythm and is the length, in time, of one complete cycle). A diurnal rhythm is synchronized with the day/night cycle, while the ultradian and infradian rhythms have a period shorter and longer than 24 hours, respectively. Disruptions in the circadian rhythms contribute to the pathology of cardiovascular diseases, cancer, metabolic syndromes and aging. A transcription/translation feedback loop (TTFL) forms the core of the molecular circadian clock mechanism. Transcription factors, CLOCK or NPAS2 and BMAL1 or BMAL2, form the positive limb of the feedback loop, act in the form of a heterodimer and activate the transcription of core clock genes and clock-controlled genes (involved in key metabolic processes), harboring E-box elements (5'-CACGTG-3') within their promoters. The core clock genes: PER1/2/3 and CRY1/2 which are transcriptional repressors form the negative limb of the feedback loop and interact with the CLOCK|NPAS2-BMAL1|BMAL2 heterodimer inhibiting its activity and thereby negatively regulating their own expression. This heterodimer also activates nuclear receptors NR1D1/2 and RORA/B/G, which form a second feedback loop and which activate and repress BMAL1 transcription, respectively. The CLOCK-BMAL2 heterodimer activates the transcription of SERPINE1/PAI1 and BHLHE40/DEC1. The chain is Basic helix-loop-helix ARNT-like protein 2 from Homo sapiens (Human).